The primary structure comprises 467 residues: Cytochrome c-552 (467 aa).

The signal sequence occupies residues 1-27; the sequence is MVKKLTGKSFALSALVAASFVAAGAMA. Position 87 (H87) interacts with heme c. C115, C118, and K119 together coordinate heme. Residues C153, C156, H157, C195, C198, and H199 each contribute to the heme c site. 4 residues coordinate Ca(2+): E201, Y202, K250, and Q252. A substrate-binding site is contributed by Y202. Residue H253 participates in substrate binding. Heme c-binding residues include H264, C271, C274, H275, H290, C303, C306, H307, and H382.

Belongs to the cytochrome c-552 family. Requires Ca(2+) as cofactor. Heme c is required as a cofactor.

Its subcellular location is the periplasm. It catalyses the reaction 6 Fe(III)-[cytochrome c] + NH4(+) + 2 H2O = 6 Fe(II)-[cytochrome c] + nitrite + 8 H(+). It participates in nitrogen metabolism; nitrate reduction (assimilation). Catalyzes the reduction of nitrite to ammonia, consuming six electrons in the process. This Shewanella amazonensis (strain ATCC BAA-1098 / SB2B) protein is Cytochrome c-552.